The following is a 255-amino-acid chain: tRNA pseudouridine synthase A (255 aa).

Asp-52 functions as the Nucleophile in the catalytic mechanism. Tyr-111 contributes to the substrate binding site.

It belongs to the tRNA pseudouridine synthase TruA family. In terms of assembly, homodimer.

The catalysed reaction is uridine(38/39/40) in tRNA = pseudouridine(38/39/40) in tRNA. Functionally, formation of pseudouridine at positions 38, 39 and 40 in the anticodon stem and loop of transfer RNAs. In Cereibacter sphaeroides (strain ATCC 17029 / ATH 2.4.9) (Rhodobacter sphaeroides), this protein is tRNA pseudouridine synthase A.